A 381-amino-acid polypeptide reads, in one-letter code: Alkanesulfonate monooxygenase (381 aa).

The protein belongs to the SsuD family. As to quaternary structure, homotetramer.

It carries out the reaction an alkanesulfonate + FMNH2 + O2 = an aldehyde + FMN + sulfite + H2O + 2 H(+). Its function is as follows. Catalyzes the desulfonation of aliphatic sulfonates. The polypeptide is Alkanesulfonate monooxygenase (Escherichia coli O8 (strain IAI1)).